Here is a 160-residue protein sequence, read N- to C-terminus: Probable chemoreceptor glutamine deamidase CheD 1 (160 aa).

It belongs to the CheD family.

The catalysed reaction is L-glutaminyl-[protein] + H2O = L-glutamyl-[protein] + NH4(+). Probably deamidates glutamine residues to glutamate on methyl-accepting chemotaxis receptors (MCPs), playing an important role in chemotaxis. The polypeptide is Probable chemoreceptor glutamine deamidase CheD 1 (Syntrophus aciditrophicus (strain SB)).